A 642-amino-acid chain; its full sequence is Threonine--tRNA ligase (642 aa).

One can recognise a TGS domain in the interval 1–61 (MPVITLPDGS…VDDASVAIIT (61 aa)). Residues 243-534 (DHRKIGKQLD…LTEEYAGFFP (292 aa)) form a catalytic region. Zn(2+) is bound by residues Cys334, His385, and His511.

It belongs to the class-II aminoacyl-tRNA synthetase family. Homodimer. Zn(2+) is required as a cofactor.

The protein localises to the cytoplasm. It carries out the reaction tRNA(Thr) + L-threonine + ATP = L-threonyl-tRNA(Thr) + AMP + diphosphate + H(+). Functionally, catalyzes the attachment of threonine to tRNA(Thr) in a two-step reaction: L-threonine is first activated by ATP to form Thr-AMP and then transferred to the acceptor end of tRNA(Thr). Also edits incorrectly charged L-seryl-tRNA(Thr). This is Threonine--tRNA ligase from Erwinia tasmaniensis (strain DSM 17950 / CFBP 7177 / CIP 109463 / NCPPB 4357 / Et1/99).